Consider the following 421-residue polypeptide: Putative transporter AmpG 3 (421 aa).

A run of 12 helical transmembrane segments spans residues 6 to 26 (YLIG…LIFF), 41 to 61 (IIGA…WSPF), 80 to 100 (WALV…KRSP), 104 to 124 (LCIT…QDIV), 139 to 159 (LSIV…LGSV), 166 to 186 (IIFG…VGPI), 230 to 250 (LLLI…PMAM), 274 to 294 (LLIM…IGIF), 297 to 317 (VLIG…LATI), 324 to 344 (FIIT…IISI), 360 to 380 (AISA…GGIC), and 388 to 408 (VFFL…YTIY).

This sequence belongs to the major facilitator superfamily.

The protein localises to the cell inner membrane. The sequence is that of Putative transporter AmpG 3 (ampG3) from Rickettsia prowazekii (strain Madrid E).